The following is a 251-amino-acid chain: CDP-diacylglycerol pyrophosphatase (251 aa).

Residues 5 to 25 (GYFLLAVIVIVAAAGVGYWKF) form a helical membrane-spanning segment.

This sequence belongs to the Cdh family.

Its subcellular location is the cell inner membrane. It catalyses the reaction a CDP-1,2-diacyl-sn-glycerol + H2O = a 1,2-diacyl-sn-glycero-3-phosphate + CMP + 2 H(+). It functions in the pathway phospholipid metabolism; CDP-diacylglycerol degradation; phosphatidate from CDP-diacylglycerol: step 1/1. This chain is CDP-diacylglycerol pyrophosphatase, found in Salmonella paratyphi A (strain ATCC 9150 / SARB42).